We begin with the raw amino-acid sequence, 391 residues long: Formate-dependent phosphoribosylglycinamide formyltransferase (391 aa).

Residues Glu-18–Leu-19 and Glu-78 contribute to the N(1)-(5-phospho-beta-D-ribosyl)glycinamide site. Residues Arg-110, Lys-151, Ser-156 to Gln-161, Glu-191 to Ile-194, and Glu-199 contribute to the ATP site. An ATP-grasp domain is found at Glu-115–Leu-305. Mg(2+) is bound by residues Glu-264 and Glu-276. Residues Asp-283, Lys-353, and Arg-360–Arg-361 contribute to the N(1)-(5-phospho-beta-D-ribosyl)glycinamide site.

The protein belongs to the PurK/PurT family. As to quaternary structure, homodimer.

It catalyses the reaction N(1)-(5-phospho-beta-D-ribosyl)glycinamide + formate + ATP = N(2)-formyl-N(1)-(5-phospho-beta-D-ribosyl)glycinamide + ADP + phosphate + H(+). Its pathway is purine metabolism; IMP biosynthesis via de novo pathway; N(2)-formyl-N(1)-(5-phospho-D-ribosyl)glycinamide from N(1)-(5-phospho-D-ribosyl)glycinamide (formate route): step 1/1. Involved in the de novo purine biosynthesis. Catalyzes the transfer of formate to 5-phospho-ribosyl-glycinamide (GAR), producing 5-phospho-ribosyl-N-formylglycinamide (FGAR). Formate is provided by PurU via hydrolysis of 10-formyl-tetrahydrofolate. In Prochlorococcus marinus (strain MIT 9312), this protein is Formate-dependent phosphoribosylglycinamide formyltransferase.